We begin with the raw amino-acid sequence, 904 residues long: Translation initiation factor IF-2 (904 aa).

Disordered regions lie at residues 102–122 (TYVKSENEGGGRAAPMTPDEE), 134–252 (RQRN…MVAG), and 267–316 (HLSA…ERPT). Positions 134–177 (RQRNLEEQQRLAESDRVRDEAIQRKREEEQAAKDRAEAERKAAE) are enriched in basic and acidic residues. Over residues 178–230 (EAAAAASAPAPVADAPKPSAAAPAARLPSSPSSAPRAARPAGASPASRPAAPA) the composition is skewed to low complexity. Residues 403–572 (SRPPVVTIMG…SLQAEVLELK (170 aa)) enclose the tr-type G domain. The G1 stretch occupies residues 412–419 (GHVDHGKT). Residue 412-419 (GHVDHGKT) coordinates GTP. Residues 437–441 (GITQH) form a G2 region. A G3 region spans residues 458 to 461 (DTPG). GTP contacts are provided by residues 458–462 (DTPGH) and 512–515 (NKID). The tract at residues 512 to 515 (NKID) is G4. Positions 548-550 (SAK) are G5.

It belongs to the TRAFAC class translation factor GTPase superfamily. Classic translation factor GTPase family. IF-2 subfamily.

Its subcellular location is the cytoplasm. Its function is as follows. One of the essential components for the initiation of protein synthesis. Protects formylmethionyl-tRNA from spontaneous hydrolysis and promotes its binding to the 30S ribosomal subunits. Also involved in the hydrolysis of GTP during the formation of the 70S ribosomal complex. This Xanthomonas axonopodis pv. citri (strain 306) protein is Translation initiation factor IF-2.